Reading from the N-terminus, the 494-residue chain is GlcNAc-binding protein A (494 aa).

The signal sequence occupies residues 1–21 (MKLNKIMLAMVVMSISGTAMA). The Chitin-binding type-4 domain occupies 22-192 (HGYIENPPSR…TFYNMIDAEF (171 aa)). The Chitin-binding type-3 domain occupies 435–484 (APAWSNKSSYQAKDTVTHNGRIYMSKWWADKASVPGDAAVTDTTGNGSGW). Residues 474-494 (VTDTTGNGSGWGKVWEDKGAC) form a disordered region.

It belongs to the GbpA family.

The protein resides in the secreted. Probably interacts with GlcNAc residues. May promote attachment to both epithelial cell surfaces and chitin. This is GlcNAc-binding protein A from Yersinia enterocolitica serotype O:8 / biotype 1B (strain NCTC 13174 / 8081).